We begin with the raw amino-acid sequence, 1898 residues long: Protein NYNRIN (1898 aa).

5 disordered regions span residues 289 to 315 (SNNQ…STNH), 424 to 450 (LPSA…CPRP), 467 to 533 (DVKD…TDQS), 618 to 691 (EPTT…TDAG), and 711 to 731 (VSLL…SGTL). Positions 618 to 627 (EPTTPKTPQA) are enriched in polar residues. Residues 649 to 672 (PAATVSKAPAASKAPAAPKVPVTP) are compositionally biased toward low complexity. The RNase NYN domain occupies 792-942 (LRRVVIDGSS…LGRDGPTLDE (151 aa)). The interval 968–1019 (SASVTELSDDADSGPLESLPNMEEVREEKEERQDEEQRQGQGTQKAAEEDDL) is disordered. Positions 990 to 1005 (EEVREEKEERQDEEQR) are enriched in basic and acidic residues. One can recognise an RNase H type-1 domain in the interval 1304 to 1450 (LSTFVCIHMS…VDTLAKQGAQ (147 aa)). A run of 2 helical transmembrane segments spans residues 1372 to 1392 (VVFL…LPLW) and 1408 to 1428 (PSLL…PFIY). The Integrase catalytic domain maps to 1609-1774 (RSTAPWSNLQ…ESRLTEPLWW (166 aa)).

The protein localises to the membrane. The protein is Protein NYNRIN (NYNRIN) of Homo sapiens (Human).